A 370-amino-acid polypeptide reads, in one-letter code: Ni-sirohydrochlorin a,c-diamide reductive cyclase complex, component CfbD (370 aa).

The protein belongs to the NifD/NifK/NifE/NifN family. As to quaternary structure, homodimer or monomer. The Ni-sirohydrochlorin a,c-diamide reductive cyclase complex is composed of a NifH homolog component CfbC and a NifD homolog component CfbD. It depends on [4Fe-4S] cluster as a cofactor.

The catalysed reaction is Ni-sirohydrochlorin a,c-diamide + 3 AH2 + ATP + H2O = 15,17(3)-seco-F430-17(3)-acid + 3 A + ADP + phosphate. In terms of biological role, involved in the biosynthesis of the unique nickel-containing tetrapyrrole coenzyme F430, the prosthetic group of methyl-coenzyme M reductase (MCR), which plays a key role in methanogenesis and anaerobic methane oxidation. Catalyzes both the six-electron reduction of the tetrahydroporphyrin ring system and the gamma-lactamization of the c-acetamide side chain of Ni-sirohydrochlorin a,c-diamide to yield 15,17(3)-seco-F430-17(3)-acid (seco-F430), the last intermediate in the biosynthesis of the coenzyme F430. The protein is Ni-sirohydrochlorin a,c-diamide reductive cyclase complex, component CfbD of Methanosarcina acetivorans (strain ATCC 35395 / DSM 2834 / JCM 12185 / C2A).